Reading from the N-terminus, the 609-residue chain is Protein NRT1/ PTR FAMILY 7.1 (609 aa).

A run of 2 helical transmembrane segments spans residues 67–87 and 109–129; these read IILLVNQGLATLAFFGVGVNL and WTGTVYMFSLVGAFLSDSYWG. T133 is subject to Phosphothreonine. 10 consecutive transmembrane segments (helical) span residues 136-156, 173-193, 216-236, 243-263, 367-387, 402-422, 438-458, 474-494, 516-536, and 559-579; these read IFQVIFVIGVGLLSFVSWFFL, SSLGVAIFYLSVYLVAFGYGG, FFSYFYFALNVGALFSNTILV, LWTEGFLVSLGSAIVALVAFL, PIWLCTIIYSVIFTQMASLFV, IPAASMSVFDIFSVFVSTGIY, MGIGLIIGIMAMVAAGLTEIQ, ILWQIPQYVLVGASEVFMYVG, MASMALGNYVSSLMVNIVMAI, and FYFLIAALAAIDFVVYLIFAK.

Belongs to the major facilitator superfamily. Proton-dependent oligopeptide transporter (POT/PTR) (TC 2.A.17) family. Expressed in flowers.

It localises to the membrane. In Arabidopsis thaliana (Mouse-ear cress), this protein is Protein NRT1/ PTR FAMILY 7.1 (NPF7.1).